We begin with the raw amino-acid sequence, 362 residues long: 3-isopropylmalate dehydrogenase (362 aa).

78–91 (GYKWDSLPPHQRPE) provides a ligand contact to NAD(+). Arg-98, Arg-108, Arg-136, and Asp-226 together coordinate substrate. The Mg(2+) site is built by Asp-226, Asp-250, and Asp-254. Residue 284–296 (GSAPDIAGQDKAN) participates in NAD(+) binding.

The protein belongs to the isocitrate and isopropylmalate dehydrogenases family. LeuB type 1 subfamily. As to quaternary structure, homodimer. Requires Mg(2+) as cofactor. Mn(2+) serves as cofactor.

Its subcellular location is the cytoplasm. The catalysed reaction is (2R,3S)-3-isopropylmalate + NAD(+) = 4-methyl-2-oxopentanoate + CO2 + NADH. It functions in the pathway amino-acid biosynthesis; L-leucine biosynthesis; L-leucine from 3-methyl-2-oxobutanoate: step 3/4. Its function is as follows. Catalyzes the oxidation of 3-carboxy-2-hydroxy-4-methylpentanoate (3-isopropylmalate) to 3-carboxy-4-methyl-2-oxopentanoate. The product decarboxylates to 4-methyl-2 oxopentanoate. In Nostoc sp. (strain PCC 7120 / SAG 25.82 / UTEX 2576), this protein is 3-isopropylmalate dehydrogenase.